The primary structure comprises 663 residues: Transforming growth factor beta activator LRRC32 (663 aa).

Residues 1-17 (MSHQILLLLAMLTLGLA) form the signal peptide. Residues 18 to 628 (ISQRREQVPC…CEKGGLKNVN (611 aa)) are Extracellular-facing. The LRRNT domain occupies 22 to 49 (REQVPCRTVNKEALCHGLGLLQVPSVLS). LRR repeat units follow at residues 49–72 (SLDIQALYLSGNQLQSILVSPLGF), 73–96 (YTALRHLDLSDNQISFLQAGVFQA), 98–123 (PYLEHLNLAHNRLATGMALNSGGLGR), 125–148 (PLLVSLDLSGNSLHGNLVERLLGE), 149–172 (TPRLRTLSLAENSLTRLARHTFWG), 174–196 (PAVEQLDLHSNVLMDIEDGAFEA), 197–220 (LPHLTHLNLSRNSLTCISDFSLQQ), 222–241 (QVLDLSCNSIEAFQTAPEPQ), 243–267 (QFQLAWLDLRENKLLHFPDLAVFPR), and 269–287 (IYLNVSNNLIQLPAGLPRG). A glycan (N-linked (GlcNAc...) asparagine) is linked at asparagine 204. N-linked (GlcNAc...) asparagine glycosylation is found at asparagine 272, asparagine 305, and asparagine 309. Residues 291–311 (LHAPSEGWSASPLSNPSRNAS) form a disordered region. Residues 301 to 311 (SPLSNPSRNAS) show a composition bias toward polar residues. LRR repeat units follow at residues 315–338 (LSQLLNLDLSYNEIELVPASFLEH), 340–362 (TSLRFLNLSRNCLRSFEARQVDS), 363–386 (LPCLVLLDLSHNVLEALELGTKVL), 387–409 (GSLQTLLLQDNALQELPPYTFAS), 411–433 (ASLQRLNLQGNQVSPCGGPAEPG), 443–466 (IPTLHVLNMAGNSMGMLRAGSFLH), 468–489 (PLTELDLSTNPGLDVATGALVG), 491–514 (EASLEVLELQGNGLTVLRVDLPCF), 515–539 (LRLKRLNLAENQLSHLPAWTRAVSL), 541–559 (VLDLRNNSFSLLPGNAMGG), and 561–584 (ETSLRRLYLQGNPLSCCGNGWLAA). The N-linked (GlcNAc...) asparagine glycan is linked to asparagine 346. Asparagine 546 carries an N-linked (GlcNAc...) asparagine glycan. Positions 572-621 (NPLSCCGNGWLAAQLHQGRVDVDATQDLICRFGSQEELSLSLVRPEDCEK) constitute an LRRCT domain. A helical membrane pass occupies residues 629 to 649 (LILLLSFTLVSAIVLTTLATI). Over 650–663 (CFLRRQKLSQQYKA) the chain is Cytoplasmic.

It belongs to the LRRC32/LRRC33 family. Interacts with TGFB1; associates via disulfide bonds with the Latency-associated peptide chain (LAP) regulatory chain of TGFB1, leading to regulate activation of TGF-beta-1. Interacts with TGFB2. Interacts with TGFB3; associates via disulfide bonds with the Latency-associated peptide chain (LAP) regulatory chain of TGFB3, leading to regulate activation of TGF-beta-3. Interacts with LAPTM4B; decreases TGFB1 production in regulatory T-cells. Present in medial edge epithelial cells at 14.5 dpc (at protein level).

It is found in the cell membrane. The protein localises to the cell surface. Its function is as follows. Key regulator of transforming growth factor beta (TGFB1, TGFB2 and TGFB3) that controls TGF-beta activation by maintaining it in a latent state during storage in extracellular space. Associates specifically via disulfide bonds with the Latency-associated peptide (LAP), which is the regulatory chain of TGF-beta, and regulates integrin-dependent activation of TGF-beta. Able to outcompete LTBP1 for binding to LAP regulatory chain of TGF-beta. Controls activation of TGF-beta-1 (TGFB1) on the surface of activated regulatory T-cells (Tregs). Required for epithelial fusion during palate development by regulating activation of TGF-beta-3 (TGFB3). The sequence is that of Transforming growth factor beta activator LRRC32 from Mus musculus (Mouse).